The chain runs to 201 residues: Proteasome subunit beta type-2 (201 aa).

Met-1 is modified (N-acetylmethionine).

The protein belongs to the peptidase T1B family. As to quaternary structure, the 26S proteasome consists of a 20S proteasome core and two 19S regulatory subunits. The 20S proteasome core is a barrel-shaped complex made of 28 subunits that are arranged in four stacked rings. The two outer rings are each formed by seven alpha subunits, and the two inner rings are formed by seven beta subunits. The proteolytic activity is exerted by three beta-subunits PSMB5, PSMB6 and PSMB7. (Microbial infection) Interacts with HIV-1 protein Tat.

The protein localises to the cytoplasm. It is found in the nucleus. Non-catalytic component of the 20S core proteasome complex involved in the proteolytic degradation of most intracellular proteins. This complex plays numerous essential roles within the cell by associating with different regulatory particles. Associated with two 19S regulatory particles, forms the 26S proteasome and thus participates in the ATP-dependent degradation of ubiquitinated proteins. The 26S proteasome plays a key role in the maintenance of protein homeostasis by removing misfolded or damaged proteins that could impair cellular functions, and by removing proteins whose functions are no longer required. Associated with the PA200 or PA28, the 20S proteasome mediates ubiquitin-independent protein degradation. This type of proteolysis is required in several pathways including spermatogenesis (20S-PA200 complex) or generation of a subset of MHC class I-presented antigenic peptides (20S-PA28 complex). In Homo sapiens (Human), this protein is Proteasome subunit beta type-2.